The sequence spans 381 residues: uncharacterized protein (381 aa).

The next 11 helical transmembrane spans lie at 10 to 29 (IFFSLFGIFIFSCINAINFY), 75 to 93 (IILISLSLLIICTINLIIL), 98 to 117 (LIKINFILINFGIFSYFTSR), 130 to 147 (YLFLACIILLWAGGNLMV), 157 to 179 (TNNTIVICALLYCINILTEFLHY), 199 to 221 (IELQLLTGFVVSYITLNILWYYE), 236 to 255 (LILKYIFLTICFAIIPICYI), 262 to 284 (YFANLSLNIILLICFILLPIHGT), 289 to 311 (NILYIILIGNCLGAIFICNILIL), 323 to 340 (ALLSYFSMCSIGIYAGAL), and 355 to 374 (LFSVFAVVGSFVTYHFWYFI).

It localises to the cell membrane. This is an uncharacterized protein from Rickettsia prowazekii (strain Madrid E).